The following is a 91-amino-acid chain: RNA-binding protein Hfq (91 aa).

One can recognise a Sm domain in the interval 9–68 (DPFLNALRRERVPVSIYLVNGIKLQGQVESFDQFVILLKNTVSQMVYKHAISTVVPSRPF). Residues 66-91 (RPFNVGSHQGGSSNYNAQQDDSAGEQ) form a disordered region. The span at 71 to 91 (GSHQGGSSNYNAQQDDSAGEQ) shows a compositional bias: polar residues.

Belongs to the Hfq family. Homohexamer.

Its function is as follows. RNA chaperone that binds small regulatory RNA (sRNAs) and mRNAs to facilitate mRNA translational regulation in response to envelope stress, environmental stress and changes in metabolite concentrations. Also binds with high specificity to tRNAs. In Shewanella amazonensis (strain ATCC BAA-1098 / SB2B), this protein is RNA-binding protein Hfq.